A 182-amino-acid polypeptide reads, in one-letter code: Putative pre-16S rRNA nuclease (182 aa).

The protein belongs to the YqgF nuclease family.

The protein localises to the cytoplasm. In terms of biological role, could be a nuclease involved in processing of the 5'-end of pre-16S rRNA. This Corynebacterium aurimucosum (strain ATCC 700975 / DSM 44827 / CIP 107346 / CN-1) (Corynebacterium nigricans) protein is Putative pre-16S rRNA nuclease.